The primary structure comprises 674 residues: Probable potassium transport system protein Kup (674 aa).

A run of 12 helical transmembrane segments spans residues 7–27 (IFWGALITLGIVYGDIGTSPL), 52–72 (LSLVFWTLMLMTTIKYVLIAL), 95–115 (WLILPALLGGAALLADGTLTP), 145–165 (LVTFVILLVLFLIQRFGTSFI), 169–189 (FGPLMLLWFSFLAIFGIVNLI), 204–224 (LMLLFSPANKVGIFILGSVFL), 244–264 (IYLTWPFVCGALVLNYFGQGA), 291–311 (VYLFGVLISTIAAIIASQALI), 342–362 (IYIRTINWSLCICTLLVLVYF), 368–388 (MEAAYGLAITITMLMTTILLS), 397–417 (VVFNGIFLAVFLSVELIFLIS), and 425–445 (GGYVTLLITLLILLIMVIWYF).

Belongs to the HAK/KUP transporter (TC 2.A.72) family.

The protein resides in the cell membrane. It carries out the reaction K(+)(in) + H(+)(in) = K(+)(out) + H(+)(out). Transport of potassium into the cell. Likely operates as a K(+):H(+) symporter. In Ligilactobacillus salivarius (strain UCC118) (Lactobacillus salivarius), this protein is Probable potassium transport system protein Kup.